Here is a 120-residue protein sequence, read N- to C-terminus: uncharacterized protein (120 aa).

Residues P80–A99 are disordered.

This is an uncharacterized protein from Goose circovirus (GoCV).